The chain runs to 199 residues: Cilia- and flagella-associated protein 20 (199 aa).

The protein belongs to the CFAP20 family. In terms of tissue distribution, expressed in spermatocytes and chordotonal organs in sensory neurons of the antenna.

Its subcellular location is the nucleus. The protein resides in the nucleolus. The protein localises to the cell projection. It is found in the cilium. It localises to the cytoplasm. Its subcellular location is the cytoskeleton. The protein resides in the microtubule organizing center. The protein localises to the centrosome. It is found in the centriole. It localises to the flagellum. Its subcellular location is the cilium axoneme. Cilium- and flagellum-specific protein that plays a role in axonemal structure organization and motility. Microtubule inner protein (MIP) part of the dynein-decorated doublet microtubules (DMTs) in cilia axoneme, which is required for motile cilia beating. Involved in the regulation of the size and morphology of cilia. Required for sperm individualization, differentiation of the sperm flagellum and tubulin polyglycylation of axonemal microtubules. The protein is Cilia- and flagella-associated protein 20 of Drosophila melanogaster (Fruit fly).